We begin with the raw amino-acid sequence, 485 residues long: Aspartyl/glutamyl-tRNA(Asn/Gln) amidotransferase subunit B (485 aa).

The protein belongs to the GatB/GatE family. GatB subfamily. As to quaternary structure, heterotrimer of A, B and C subunits.

The catalysed reaction is L-glutamyl-tRNA(Gln) + L-glutamine + ATP + H2O = L-glutaminyl-tRNA(Gln) + L-glutamate + ADP + phosphate + H(+). It catalyses the reaction L-aspartyl-tRNA(Asn) + L-glutamine + ATP + H2O = L-asparaginyl-tRNA(Asn) + L-glutamate + ADP + phosphate + 2 H(+). In terms of biological role, allows the formation of correctly charged Asn-tRNA(Asn) or Gln-tRNA(Gln) through the transamidation of misacylated Asp-tRNA(Asn) or Glu-tRNA(Gln) in organisms which lack either or both of asparaginyl-tRNA or glutaminyl-tRNA synthetases. The reaction takes place in the presence of glutamine and ATP through an activated phospho-Asp-tRNA(Asn) or phospho-Glu-tRNA(Gln). In Anaplasma marginale (strain Florida), this protein is Aspartyl/glutamyl-tRNA(Asn/Gln) amidotransferase subunit B.